A 692-amino-acid chain; its full sequence is Proprotein convertase subtilisin/kexin type 9 (692 aa).

An N-terminal signal peptide occupies residues 1–30 (MGTVSSRRSWWPLPLPLLLLLLLGLAGARA). Residues 31–152 (QEDEDGDYEE…IEEDSSVFAQ (122 aa)) constitute a propeptide that is removed on maturation. Residue Y38 is modified to Sulfotyrosine. At S47 the chain carries Phosphoserine. The Inhibitor I9 domain occupies 77–149 (TYVVVLKEET…VDYIEEDSSV (73 aa)). The region spanning 155 to 444 (PWNLERITPA…VLTPNLVAAL (290 aa)) is the Peptidase S8 domain. Active-site charge relay system residues include D186 and H226. 2 disulfides stabilise this stretch: C223–C255 and C323–C358. Catalysis depends on S386, which acts as the Charge relay system. The interval 450–692 (RAGWQLFCRT…HLVQASQELQ (243 aa)) is C-terminal domain. 3 disulfide bridges follow: C457/C527, C477/C526, and C486/C509. N-linked (GlcNAc...) asparagine glycosylation is present at N533. Disulfide bonds link C534-C601, C552-C600, C562-C588, C608-C679, C626-C678, and C635-C654. A Phosphoserine modification is found at S688.

Belongs to the peptidase S8 family. Monomer. Can self-associate to form dimers and higher multimers which may have increased LDLR degrading activity. The precursor protein but not the mature protein may form multimers. Interacts with APOB, VLDLR, LRP8/APOER2 and BACE1. The full-length immature form (pro-PCSK9) interacts with SCNN1A, SCNN1B and SCNN1G. The pro-PCSK9 form (via C-terminal domain) interacts with LDLR. Interacts (via the C-terminal domain) with ANXA2 (via repeat Annexin 1); the interaction inhibits the degradation of LDLR. It depends on Ca(2+) as a cofactor. In terms of processing, cleavage by furin and PCSK5 generates a truncated inactive protein that is unable to induce LDLR degradation. Undergoes autocatalytic cleavage in the endoplasmic reticulum to release the propeptide from the N-terminus and the cleavage of the propeptide is strictly required for its maturation and activation. The cleaved propeptide however remains associated with the catalytic domain through non-covalent interactions, preventing potential substrates from accessing its active site. As a result, it is secreted from cells as a propeptide-containing, enzymatically inactive protein. Post-translationally, phosphorylation protects the propeptide against proteolysis.

The protein localises to the cytoplasm. It is found in the secreted. Its subcellular location is the endosome. The protein resides in the lysosome. It localises to the cell surface. The protein localises to the endoplasmic reticulum. It is found in the golgi apparatus. With respect to regulation, its proteolytic activity is autoinhibited by the non-covalent binding of the propeptide to the catalytic domain. Inhibited by EGTA. Crucial player in the regulation of plasma cholesterol homeostasis. Binds to low-density lipid receptor family members: low density lipoprotein receptor (LDLR), very low density lipoprotein receptor (VLDLR), apolipoprotein E receptor (LRP1/APOER) and apolipoprotein receptor 2 (LRP8/APOER2), and promotes their degradation in intracellular acidic compartments. Acts via a non-proteolytic mechanism to enhance the degradation of the hepatic LDLR through a clathrin LDLRAP1/ARH-mediated pathway. May prevent the recycling of LDLR from endosomes to the cell surface or direct it to lysosomes for degradation. Can induce ubiquitination of LDLR leading to its subsequent degradation. Inhibits intracellular degradation of APOB via the autophagosome/lysosome pathway in a LDLR-independent manner. Involved in the disposal of non-acetylated intermediates of BACE1 in the early secretory pathway. Inhibits epithelial Na(+) channel (ENaC)-mediated Na(+) absorption by reducing ENaC surface expression primarily by increasing its proteasomal degradation. Regulates neuronal apoptosis via modulation of LRP8/APOER2 levels and related anti-apoptotic signaling pathways. The protein is Proprotein convertase subtilisin/kexin type 9 (PCSK9) of Colobus guereza (Mantled guereza).